Consider the following 314-residue polypeptide: Inactive chitinase-like protein 1 (314 aa).

A signal peptide spans 1-19 (MKEIVRALEGYGPPKDKAA). Residues 20-60 (EQCGWQAGGALCPGGLCCSQYGWCANTPEYCGSGCQSQCDG) form the Chitin-binding type-1 domain. 7 disulfides stabilise this stretch: Cys-22–Cys-37, Cys-31–Cys-43, Cys-36–Cys-50, Cys-54–Cys-58, Cys-92–Cys-154, Cys-166–Cys-174, and Cys-273–Cys-305.

It belongs to the glycosyl hydrolase 19 family. Chitinase class I subfamily.

Functionally, inactive chitinase-like protein that does not exhibit hydrolytic activity toward chitin. Binds strongly to chitin and possesses antifungal activity toward the fungal pathogen Altenaria alternata in plate assays. Inhibits the growth of Fusarium oxysporum on plate assays. Probably involved in defense against fungal pathogens through a mechanism that only involves carbohydrate binding. The protein is Inactive chitinase-like protein 1 of Hevea brasiliensis (Para rubber tree).